The following is a 182-amino-acid chain: ADP-ribosylation factor 3 (182 aa).

G2 carries the N-myristoyl glycine lipid modification. GTP is bound by residues 24–31 (GLDNAGKT), 67–71 (DLGGQ), and 126–129 (NKQD).

It belongs to the small GTPase superfamily. Arf family. Interacts with GRIP; but preferentially when bound to GTP.

It is found in the golgi apparatus. Functionally, GTP-binding protein involved in protein trafficking; may modulate vesicle budding and uncoating within the Golgi apparatus. This is ADP-ribosylation factor 3 (ARF3) from Arabidopsis thaliana (Mouse-ear cress).